A 204-amino-acid polypeptide reads, in one-letter code: Dual-action ribosomal maturation protein DarP (204 aa).

2 disordered regions span residues 1–31 (MPPMTRKTRIQPIEPVAEEDDNGYDRPSKSQ) and 182–204 (GGASDSDDEAADDAGDDHDDDEA). Residues 186–204 (DSDDEAADDAGDDHDDDEA) show a composition bias toward acidic residues.

This sequence belongs to the DarP family.

The protein localises to the cytoplasm. Member of a network of 50S ribosomal subunit biogenesis factors which assembles along the 30S-50S interface, preventing incorrect 23S rRNA structures from forming. Promotes peptidyl transferase center (PTC) maturation. This is Dual-action ribosomal maturation protein DarP from Burkholderia orbicola (strain MC0-3).